Consider the following 264-residue polypeptide: Acyl-[acyl-carrier-protein]--UDP-N-acetylglucosamine O-acyltransferase (264 aa).

The protein belongs to the transferase hexapeptide repeat family. LpxA subfamily. As to quaternary structure, homotrimer.

Its subcellular location is the cytoplasm. It carries out the reaction a (3R)-hydroxyacyl-[ACP] + UDP-N-acetyl-alpha-D-glucosamine = a UDP-3-O-[(3R)-3-hydroxyacyl]-N-acetyl-alpha-D-glucosamine + holo-[ACP]. Its pathway is glycolipid biosynthesis; lipid IV(A) biosynthesis; lipid IV(A) from (3R)-3-hydroxytetradecanoyl-[acyl-carrier-protein] and UDP-N-acetyl-alpha-D-glucosamine: step 1/6. Functionally, involved in the biosynthesis of lipid A, a phosphorylated glycolipid that anchors the lipopolysaccharide to the outer membrane of the cell. In Rickettsia conorii (strain ATCC VR-613 / Malish 7), this protein is Acyl-[acyl-carrier-protein]--UDP-N-acetylglucosamine O-acyltransferase.